The following is a 404-amino-acid chain: Dihydrolipoyllysine-residue acetyltransferase component of pyruvate dehydrogenase complex (404 aa).

The 77-residue stretch at 2–78 folds into the Lipoyl-binding domain; sequence PIKILMPALS…PVNSLIAVLS (77 aa). Residue Lys43 is modified to N6-lipoyllysine. Residues 128–165 form the Peripheral subunit-binding (PSBD) domain; the sequence is FASPLAKRLAKIRNIRLESVQGSGPHGRIVKQDILSYS. Residue His377 is part of the active site.

It belongs to the 2-oxoacid dehydrogenase family. In terms of assembly, forms a 24-polypeptide structural core with octahedral symmetry. (R)-lipoate is required as a cofactor.

The catalysed reaction is N(6)-[(R)-dihydrolipoyl]-L-lysyl-[protein] + acetyl-CoA = N(6)-[(R)-S(8)-acetyldihydrolipoyl]-L-lysyl-[protein] + CoA. In terms of biological role, the pyruvate dehydrogenase complex catalyzes the overall conversion of pyruvate to acetyl-CoA and CO(2). It contains multiple copies of three enzymatic components: pyruvate dehydrogenase (E1), dihydrolipoamide acetyltransferase (E2) and lipoamide dehydrogenase (E3). This is Dihydrolipoyllysine-residue acetyltransferase component of pyruvate dehydrogenase complex (pdhC) from Rickettsia typhi (strain ATCC VR-144 / Wilmington).